The primary structure comprises 288 residues: Small ribosomal subunit protein uS15m (288 aa).

Residues 1–50 (MRLFEGAFQPWKLASTNLMQQCLLLNKKSQFHTTCILQGLKKQKANQRRK) constitute a mitochondrion transit peptide.

Belongs to the universal ribosomal protein uS15 family. Component of the mitochondrial small ribosomal subunit (mt-SSU). Mature yeast 74S mitochondrial ribosomes consist of a small (37S) and a large (54S) subunit. The 37S small subunit contains a 15S ribosomal RNA (15S mt-rRNA) and at least 32 different proteins. The 54S large subunit contains a 21S rRNA (21S mt-rRNA) and at least 45 different proteins.

The protein resides in the mitochondrion. Component of the mitochondrial ribosome (mitoribosome), a dedicated translation machinery responsible for the synthesis of mitochondrial genome-encoded proteins, including at least some of the essential transmembrane subunits of the mitochondrial respiratory chain. The mitoribosomes are attached to the mitochondrial inner membrane and translation products are cotranslationally integrated into the membrane. The sequence is that of Small ribosomal subunit protein uS15m (mrps28) from Schizosaccharomyces pombe (strain 972 / ATCC 24843) (Fission yeast).